Reading from the N-terminus, the 295-residue chain is Vesicle-associated protein 4-2 (295 aa).

The span at 1-10 (MTMTEEKPTS) shows a compositional bias: basic and acidic residues. Residues 1–99 (MTMTEEKPTS…PSPSVSSVAK (99 aa)) are disordered. Residues 31-53 (NAASSAATSPFPSGASSSSTSSH) are compositionally biased toward low complexity. Residues 54–71 (LHNHHQHHHQHHHQHHHQ) show a composition bias toward basic residues. Polar residues predominate over residues 83-98 (GQNQHPTPSPSVSSVA). The MSP domain maps to 107–229 (RLKLDPSEKL…KEQILRVIFL (123 aa)). A compositionally biased stretch (basic and acidic residues) spans 249 to 263 (DAAVEARKKPPEETG). Residues 249–270 (DAAVEARKKPPEETGPKMIGEG) form a disordered region. Position 294 is a phosphoserine (Ser294).

It belongs to the VAMP-associated protein (VAP) (TC 9.B.17) family.

Functionally, may play a role in vesicle trafficking. This chain is Vesicle-associated protein 4-2 (PVA42), found in Arabidopsis thaliana (Mouse-ear cress).